Here is a 445-residue protein sequence, read N- to C-terminus: MCPRPGPPLGLWLLLGFACAAHLVGAPPRLCDVLWVLQEERDQCLQELERERLGEEQPVPGCQGLWDNVSCWPSSAPGRMVELECPRFLRMLTNSNGSLFRNCTQDGWTETFPRPDLACGVSMNDSSHERQHAYLLKLKVMYTVGYSSSLVMLLVALGILCAFRRLHCTRNYIHMHLFLSFILRALSNFIKDAVLFSSDDAIHCDAHRVGCKLVMVFFQYCIMANYAWLLVEGLYLHSLLVVSFFSERKCLQGFVVLGWGSPAMFVTSWAVTRHFLEDSGCWDINANAAIWWVIRGPVILSILINFILFINILRILTRKLRTQETRGQDMNHYKRLARSTLLLIPLFGVHYIVFVFSPEGAMEIQLFFELALGSFQGLVVAVLYCFLNGEVQLEVQKKWQQWHLWEPPLCPVALSSSFSNGTSSLNSTKACPSGRSRDTCKVSII.

The first 21 residues, 1 to 21 (MCPRPGPPLGLWLLLGFACAA), serve as a signal peptide directing secretion. Residues 22–137 (HLVGAPPRLC…HERQHAYLLK (116 aa)) lie on the Extracellular side of the membrane. Disulfide bonds link cysteine 44–cysteine 71, cysteine 62–cysteine 103, and cysteine 85–cysteine 119. 4 N-linked (GlcNAc...) asparagine glycosylation sites follow: asparagine 68, asparagine 96, asparagine 102, and asparagine 124. The helical transmembrane segment at 138–163 (LKVMYTVGYSSSLVMLLVALGILCAF) threads the bilayer. Over 164 to 170 (RRLHCTR) the chain is Cytoplasmic. A helical membrane pass occupies residues 171–191 (NYIHMHLFLSFILRALSNFIK). Topologically, residues 192-212 (DAVLFSSDDAIHCDAHRVGCK) are extracellular. Cysteine 211 and cysteine 281 form a disulfide bridge. A helical membrane pass occupies residues 213–235 (LVMVFFQYCIMANYAWLLVEGLY). Over 236-250 (LHSLLVVSFFSERKC) the chain is Cytoplasmic. Residues 251–272 (LQGFVVLGWGSPAMFVTSWAVT) traverse the membrane as a helical segment. The Extracellular segment spans residues 273 to 287 (RHFLEDSGCWDINAN). Residues 288–311 (AAIWWVIRGPVILSILINFILFIN) form a helical membrane-spanning segment. Over 312–336 (ILRILTRKLRTQETRGQDMNHYKRL) the chain is Cytoplasmic. The chain crosses the membrane as a helical span at residues 337–352 (ARSTLLLIPLFGVHYI). The Extracellular segment spans residues 353 to 363 (VFVFSPEGAME). Residues 364–387 (IQLFFELALGSFQGLVVAVLYCFL) form a helical membrane-spanning segment. Residues 388–445 (NGEVQLEVQKKWQQWHLWEPPLCPVALSSSFSNGTSSLNSTKACPSGRSRDTCKVSII) are Cytoplasmic-facing.

This sequence belongs to the G-protein coupled receptor 2 family. Post-translationally, phosphorylated on Ser and Thr residues at the cytoplasmic C-terminus by G protein-coupled receptor kinases (GRKs).

It is found in the cell membrane. The protein localises to the basolateral cell membrane. Its function is as follows. G protein-coupled receptor activated by secretin (SCT), which is involved in different processes such as regulation of the pH of the duodenal content, food intake and water homeostasis. Ligand binding causes a conformation change that triggers signaling via guanine nucleotide-binding proteins (G proteins) and activates cAMP-dependent pathway. Upon binding to secretin, regulates the pH of the duodenum by (1) inhibiting the secretion of gastric acid from the parietal cells of the stomach and (2) stimulating the production of bicarbonate (NaHCO(3)) from the ductal cells of the pancreas. In addition to regulating the pH of the duodenal content, plays a central role in diet induced thermogenesis: acts as a non-sympathetic brown fat (BAT) activator mediating prandial thermogenesis, which consequentially induces satiation. Mechanistically, secretin released by the gut after a meal binds to secretin receptor (SCTR) in brown adipocytes, activating brown fat thermogenesis by stimulating lipolysis, which is sensed in the brain and promotes satiation. Also able to stimulate lipolysis in white adipocytes. Also plays an important role in cellular osmoregulation by regulating renal water reabsorption. Also plays a role in the central nervous system: required for synaptic plasticity. The polypeptide is Secretin receptor (SCTR) (Oryctolagus cuniculus (Rabbit)).